Reading from the N-terminus, the 533-residue chain is D-3-phosphoglycerate dehydrogenase (533 aa).

Position 2 is an N-acetylalanine (Ala2). Position 14 is a phosphoserine (Ser14). Position 21 is an N6-acetyllysine; alternate (Lys21). A Glycyl lysine isopeptide (Lys-Gly) (interchain with G-Cter in SUMO1); alternate cross-link involves residue Lys21. Residue Lys21 forms a Glycyl lysine isopeptide (Lys-Gly) (interchain with G-Cter in SUMO2); alternate linkage. An N6-acetyllysine modification is found at Lys58. NAD(+) contacts are provided by residues Thr78, Arg155 to Ile156, Asp175, Thr207, Cys234 to Arg236, and Asp260. A Phosphothreonine modification is found at Thr78. The active site involves Arg236. Glu265 is a catalytic residue. His283 serves as the catalytic Proton donor. NAD(+) is bound at residue His283 to Ala286.

It belongs to the D-isomer specific 2-hydroxyacid dehydrogenase family. In terms of assembly, homotetramer.

It catalyses the reaction (2R)-3-phosphoglycerate + NAD(+) = 3-phosphooxypyruvate + NADH + H(+). The enzyme catalyses (R)-2-hydroxyglutarate + NAD(+) = 2-oxoglutarate + NADH + H(+). It carries out the reaction (S)-malate + NAD(+) = oxaloacetate + NADH + H(+). Its pathway is amino-acid biosynthesis; L-serine biosynthesis; L-serine from 3-phospho-D-glycerate: step 1/3. Catalyzes the reversible oxidation of 3-phospho-D-glycerate to 3-phosphonooxypyruvate, the first step of the phosphorylated L-serine biosynthesis pathway. Also catalyzes the reversible oxidation of 2-hydroxyglutarate to 2-oxoglutarate and the reversible oxidation of (S)-malate to oxaloacetate. The sequence is that of D-3-phosphoglycerate dehydrogenase (PHGDH) from Pan troglodytes (Chimpanzee).